We begin with the raw amino-acid sequence, 117 residues long: Large ribosomal subunit protein bL19 (117 aa).

Belongs to the bacterial ribosomal protein bL19 family.

Its function is as follows. This protein is located at the 30S-50S ribosomal subunit interface and may play a role in the structure and function of the aminoacyl-tRNA binding site. The polypeptide is Large ribosomal subunit protein bL19 (Micrococcus luteus (strain ATCC 4698 / DSM 20030 / JCM 1464 / CCM 169 / CCUG 5858 / IAM 1056 / NBRC 3333 / NCIMB 9278 / NCTC 2665 / VKM Ac-2230) (Micrococcus lysodeikticus)).